The sequence spans 339 residues: Thymidine kinase (339 aa).

Residue 11-18 coordinates ATP; the sequence is GAFGIGKT. The Proton acceptor role is filled by Glu39. Residues Tyr59 and Gln83 each coordinate substrate. Arg176 contacts ATP. Arg182 contacts substrate.

The protein belongs to the herpesviridae thymidine kinase family. Homodimer.

The catalysed reaction is thymidine + ATP = dTMP + ADP + H(+). Catalyzes the transfer of the gamma-phospho group of ATP to thymidine to generate dTMP in the salvage pathway of pyrimidine synthesis. The dTMP serves as a substrate for DNA polymerase during viral DNA replication. Allows the virus to be reactivated and to grow in non-proliferative cells lacking a high concentration of phosphorylated nucleic acid precursors. The chain is Thymidine kinase from Amazona oratrix (yellow-headed parrot).